We begin with the raw amino-acid sequence, 73 residues long: Large ribosomal subunit protein bL27c (73 aa).

This sequence belongs to the bacterial ribosomal protein bL27 family.

It is found in the plastid. It localises to the chloroplast. The sequence is that of Large ribosomal subunit protein bL27c (rpl27) from Haptolina hirta (Plankton alga).